Here is a 650-residue protein sequence, read N- to C-terminus: DNA gyrase subunit B (650 aa).

Residues 400–414 (RRSQEARELTRRKSP) are compositionally biased toward basic and acidic residues. A disordered region spans residues 400-422 (RRSQEARELTRRKSPFDSGSLPG). The region spanning 435 to 549 (SELYIVEGDS…QGNIFIAQPP (115 aa)) is the Toprim domain. The Mg(2+) site is built by Glu441, Asp514, and Asp516.

Belongs to the type II topoisomerase GyrB family. As to quaternary structure, heterotetramer, composed of two GyrA and two GyrB chains. In the heterotetramer, GyrA contains the active site tyrosine that forms a transient covalent intermediate with DNA, while GyrB binds cofactors and catalyzes ATP hydrolysis. Requires Mg(2+) as cofactor. It depends on Mn(2+) as a cofactor. Ca(2+) is required as a cofactor.

It localises to the cytoplasm. It catalyses the reaction ATP-dependent breakage, passage and rejoining of double-stranded DNA.. A type II topoisomerase that negatively supercoils closed circular double-stranded (ds) DNA in an ATP-dependent manner to modulate DNA topology and maintain chromosomes in an underwound state. Negative supercoiling favors strand separation, and DNA replication, transcription, recombination and repair, all of which involve strand separation. Also able to catalyze the interconversion of other topological isomers of dsDNA rings, including catenanes and knotted rings. Type II topoisomerases break and join 2 DNA strands simultaneously in an ATP-dependent manner. This is DNA gyrase subunit B from Mycoplasma genitalium (strain ATCC 33530 / DSM 19775 / NCTC 10195 / G37) (Mycoplasmoides genitalium).